A 59-amino-acid polypeptide reads, in one-letter code: U-myrmeciitoxin(01)-Mg5b (59 aa).

The first 21 residues, 1-21, serve as a signal peptide directing secretion; it reads MRLSYLSLALAIIFVLTIMHA. Positions 22–38 are excised as a propeptide; the sequence is SNVEAKASADPEPDAVG.

Expressed by the venom gland.

The protein resides in the secreted. Functionally, may have antimicrobial properties, like most ant linear peptides. This is U-myrmeciitoxin(01)-Mg5b from Myrmecia gulosa (Red bulldog ant).